Consider the following 140-residue polypeptide: Ribosome-binding factor A (140 aa).

This sequence belongs to the RbfA family. As to quaternary structure, monomer. Binds 30S ribosomal subunits, but not 50S ribosomal subunits or 70S ribosomes.

The protein localises to the cytoplasm. One of several proteins that assist in the late maturation steps of the functional core of the 30S ribosomal subunit. Associates with free 30S ribosomal subunits (but not with 30S subunits that are part of 70S ribosomes or polysomes). Required for efficient processing of 16S rRNA. May interact with the 5'-terminal helix region of 16S rRNA. In Cereibacter sphaeroides (strain ATCC 17025 / ATH 2.4.3) (Rhodobacter sphaeroides), this protein is Ribosome-binding factor A.